A 206-amino-acid chain; its full sequence is MANLFKNILDSLKLTDDEDLDDYDDYVSELEEKERRKTERQEQRQAVKQEKRTFPSQRPAFSEEAPTSSSSKLSAASGSSDFADLRKERSQRMEKTNVSKVVPIRNPQKGLEVCIMKPTSFEDSQDICDMLLSGRAAVINLEGFDVDLAQRVMDFISGAVYSLNGKLHQISSYIFIISPDSVDISGDYLDLIRQNGFEVPTLNKDF.

Residues glutamate 31–threonine 53 are compositionally biased toward basic and acidic residues. The tract at residues glutamate 31 to aspartate 81 is disordered. A compositionally biased stretch (low complexity) spans alanine 60 to serine 80.

The protein belongs to the SepF family. As to quaternary structure, homodimer. Interacts with FtsZ.

It localises to the cytoplasm. Functionally, cell division protein that is part of the divisome complex and is recruited early to the Z-ring. Probably stimulates Z-ring formation, perhaps through the cross-linking of FtsZ protofilaments. Its function overlaps with FtsA. This Lachnoclostridium phytofermentans (strain ATCC 700394 / DSM 18823 / ISDg) (Clostridium phytofermentans) protein is Cell division protein SepF.